The sequence spans 185 residues: MSHSHRDALFQWMKTYVYRHSETPFRLASGLESQHYFNCKEITLHPERLSILAECFIEEIIPKLNIEFQAVGGLTLGADPIAYAISLGYQKRGKNVFPLVVRKESKGHGTGQQIEGFWKDIKTCLVVDDVITTGGSTLKAVKVLREVGINVTKGICILDREEGGSENLQTENVTMTSIFAKSEFF.

5-phospho-alpha-D-ribose 1-diphosphate-binding positions include Arg102, Lys103, Lys106, His108, and Asp128–Ser136. The orotate site is built by Thr132 and Arg160.

It belongs to the purine/pyrimidine phosphoribosyltransferase family. PyrE subfamily. Homodimer. Requires Mg(2+) as cofactor.

The enzyme catalyses orotidine 5'-phosphate + diphosphate = orotate + 5-phospho-alpha-D-ribose 1-diphosphate. The protein operates within pyrimidine metabolism; UMP biosynthesis via de novo pathway; UMP from orotate: step 1/2. Catalyzes the transfer of a ribosyl phosphate group from 5-phosphoribose 1-diphosphate to orotate, leading to the formation of orotidine monophosphate (OMP). This chain is Orotate phosphoribosyltransferase, found in Leptospira biflexa serovar Patoc (strain Patoc 1 / Ames).